The sequence spans 351 residues: Transaldolase (351 aa).

Lys-138 serves as the catalytic Schiff-base intermediate with substrate.

It belongs to the transaldolase family. Type 2 subfamily.

The protein localises to the cytoplasm. It carries out the reaction D-sedoheptulose 7-phosphate + D-glyceraldehyde 3-phosphate = D-erythrose 4-phosphate + beta-D-fructose 6-phosphate. Its pathway is carbohydrate degradation; pentose phosphate pathway; D-glyceraldehyde 3-phosphate and beta-D-fructose 6-phosphate from D-ribose 5-phosphate and D-xylulose 5-phosphate (non-oxidative stage): step 2/3. Transaldolase is important for the balance of metabolites in the pentose-phosphate pathway. In Neisseria meningitidis serogroup C / serotype 2a (strain ATCC 700532 / DSM 15464 / FAM18), this protein is Transaldolase.